The primary structure comprises 267 residues: Undecaprenyl-diphosphatase 2 (267 aa).

8 consecutive transmembrane segments (helical) span residues 4–24 (IYFI…FLPI), 43–63 (EEKV…CWLF), 84–104 (FAVI…LFIH), 109–129 (VLFN…IILW), 147–167 (IGFK…IPGT), 186–206 (AATE…AIYD), 219–239 (ILAI…VVNA), and 243–263 (FVAK…GLII).

This sequence belongs to the UppP family.

The protein resides in the cell inner membrane. It catalyses the reaction di-trans,octa-cis-undecaprenyl diphosphate + H2O = di-trans,octa-cis-undecaprenyl phosphate + phosphate + H(+). Catalyzes the dephosphorylation of undecaprenyl diphosphate (UPP). Confers resistance to bacitracin. The sequence is that of Undecaprenyl-diphosphatase 2 from Shewanella oneidensis (strain ATCC 700550 / JCM 31522 / CIP 106686 / LMG 19005 / NCIMB 14063 / MR-1).